A 398-amino-acid polypeptide reads, in one-letter code: ORC1-type DNA replication protein 1 (398 aa).

ATP contacts are provided by residues 67-71 (TGKTA), tyrosine 208, and arginine 220.

It belongs to the CDC6/cdc18 family.

Involved in regulation of DNA replication. In Sulfurisphaera tokodaii (strain DSM 16993 / JCM 10545 / NBRC 100140 / 7) (Sulfolobus tokodaii), this protein is ORC1-type DNA replication protein 1 (cdc6-1).